The chain runs to 255 residues: Acetylglutamate kinase (255 aa).

Residues 40-41, R62, and N153 contribute to the substrate site; that span reads GG.

This sequence belongs to the acetylglutamate kinase family. ArgB subfamily.

The protein localises to the cytoplasm. The enzyme catalyses N-acetyl-L-glutamate + ATP = N-acetyl-L-glutamyl 5-phosphate + ADP. It functions in the pathway amino-acid biosynthesis; L-arginine biosynthesis; N(2)-acetyl-L-ornithine from L-glutamate: step 2/4. Catalyzes the ATP-dependent phosphorylation of N-acetyl-L-glutamate. The sequence is that of Acetylglutamate kinase from Bacillus anthracis (strain A0248).